Here is a 1257-residue protein sequence, read N- to C-terminus: Endochitinase A (1257 aa).

The first 21 residues, 1-21 (MVFKPLTIAAAIAGLTPFVSA), serve as a signal peptide directing secretion. The GH18 domain occupies 28–339 (SNVAVYYGQG…DVIKDILVAV (312 aa)). Glu175 acts as the Proton donor in catalysis. Disordered regions lie at residues 364–429 (TPVA…STPV), 595–980 (TPAA…LAPI), and 1141–1174 (DALTASPSGSQPAGESSPGQSAPTAPASTAPTTT). Residues 595 to 696 (TPAASSSPAV…STPVRSTSSV (102 aa)) are compositionally biased toward low complexity. Polar residues predominate over residues 700-715 (KSSSAPVIPKPSSTVI). Low complexity predominate over residues 716 to 935 (ATFTSSSGSL…ASGSGAQDST (220 aa)). An N-linked (GlcNAc...) asparagine glycan is attached at Asn825. Over residues 940–964 (HASTLSPSYSTPLASASGQTGSPTT) the composition is skewed to polar residues. The N-linked (GlcNAc...) asparagine glycan is linked to Asn973. Residues 1145 to 1154 (ASPSGSQPAG) show a composition bias toward polar residues. A compositionally biased stretch (low complexity) spans 1156–1174 (SSPGQSAPTAPASTAPTTT). Gly1231 is lipidated: GPI-anchor amidated glycine. A propeptide spans 1232 to 1257 (AASRVSRLQHGAGAVSAFALFLLAAI) (removed in mature form).

Belongs to the glycosyl hydrolase 18 family. Chitinase class III subfamily. Post-translationally, O-glycosylated.

It is found in the cell membrane. The protein resides in the secreted. It localises to the cell wall. It catalyses the reaction Random endo-hydrolysis of N-acetyl-beta-D-glucosaminide (1-&gt;4)-beta-linkages in chitin and chitodextrins.. Its function is as follows. GPI-anchored chitinase involved in the degradation of chitin, a component of the cell walls of fungi and exoskeletal elements of some animals (including worms and arthropods). Required to reshape the cell wall at the sites where cell wall remodeling and/or cell wall maturation actively take place such as sites of conidia formation. This is Endochitinase A (ctcA) from Aspergillus niger (strain ATCC MYA-4892 / CBS 513.88 / FGSC A1513).